A 69-amino-acid polypeptide reads, in one-letter code: Sperm protamine P1 (69 aa).

Positions 1 to 69 (MASYRNSRSR…RKRNNNTENK (69 aa)) are disordered. Basic residues-rich tracts occupy residues 7–25 (SRSR…RSRV) and 34–63 (RSSR…RKRN).

Belongs to the protamine P1 family. As to expression, testis.

The protein localises to the nucleus. It localises to the chromosome. In terms of biological role, protamines substitute for histones in the chromatin of sperm during the haploid phase of spermatogenesis. They compact sperm DNA into a highly condensed, stable and inactive complex. This Perameles gunnii (Eastern barred bandicoot) protein is Sperm protamine P1 (PRM1).